We begin with the raw amino-acid sequence, 462 residues long: uncharacterized protein (462 aa).

In terms of domain architecture, TRAM spans 12 to 70 (MLKKNDIIQVAISDLSHEGAGVAKHDGFVFFVDNALPEEVIDMRVLKVNKNSGFGKVEA). Residues Gln-294, Tyr-323, Glu-344, and Asp-392 each coordinate S-adenosyl-L-methionine. Cys-419 acts as the Nucleophile in catalysis.

Belongs to the class I-like SAM-binding methyltransferase superfamily. RNA M5U methyltransferase family.

This is an uncharacterized protein from Streptococcus pyogenes serotype M3 (strain ATCC BAA-595 / MGAS315).